Here is a 283-residue protein sequence, read N- to C-terminus: MANIRTLSDYASSPPRGSSALEGEVGQGGSPLPLFFPSGTQSGENVSWIQWLCPGIHLKSPIIIISFVQIAVYIASLAAGLAPNEILAPTPQTLVMFGANIPELIRVGEIWRLICPLFLHLNLFHILMNLWVQIRIGLTMEEKYGWKMLLAVYFGVGVLANMISAAVLFCGQMKAGASTAVFALIGVQLAELALIWHAIQDRNSAIISVCICLFFVFVSSFGSHMDSVGHIGGLVMGFAAGIWLNENSDIKPTWYDRARLTSQVALAAAPILSCIFIFLVPRC.

Polar residues predominate over residues 1 to 11 (MANIRTLSDYA). Residues 1–26 (MANIRTLSDYASSPPRGSSALEGEVG) form a disordered region. 3 helical membrane-spanning segments follow: residues 62 to 82 (IIIISFVQIAVYIASLAAGLA), 114 to 134 (ICPLFLHLNLFHILMNLWVQI), and 149 to 169 (LLAVYFGVGVLANMISAAVLF). Ser178 (nucleophile) is an active-site residue. A run of 4 helical transmembrane segments spans residues 179–199 (TAVFALIGVQLAELALIWHAI), 205–225 (AIISVCICLFFVFVSSFGSHM), 227–247 (SVGHIGGLVMGFAAGIWLNEN), and 260–280 (LTSQVALAAAPILSCIFIFLV). Residue His230 is part of the active site.

It belongs to the peptidase S54 family.

Its subcellular location is the membrane. The enzyme catalyses Cleaves type-1 transmembrane domains using a catalytic dyad composed of serine and histidine that are contributed by different transmembrane domains.. Its function is as follows. Serine protease involved in intramembrane proteolysis and the subsequent release of polypeptides from their membrane anchors. This is Rhomboid-like protease 2 (ROM2) from Toxoplasma gondii.